Reading from the N-terminus, the 540-residue chain is MSNKLAEIGNNIDSRYTAASGIRRQINKVFPTHWSFMLGEIALYSFIILLLTGVYLTLFFDPSITKVIYDGAYLPLNGVEMSRAYETALNLSFEVRGGLFIRQMHHWAALTFMVSMTVHMLRIFFTGAFRRPREANWIIGCVLLFLGMAEGFMGYSLPDDLLSGVGLRIMSAIILALPIIGTWLHWLIFGGDFPSDLMLDRFYIAHVLIIPGIILGLIAAHLALVWYQKHTQFPGAGRTENNVVGVRILPVFILETSSFGLVTFGVLALLAGLTSINAIWNLGPYNPSQVSAGSQPDIYMLWTDGAARVMPAWELYIGSYTIPGAFWVALLCGVLVGLLVGYPFIEKKITGDDAHHNLLQRPRDVPVRTSLGVMAIVFYFLLTLSGGNDLFAYHFEVSLNAMTWVGRIGLIVLPPLAYFITYRICLGLQRSDREVLEHGIETGVIKIMPNGAFVEVHQPLGPVDEHGHPVPLPYAGAPVPKQLNDLGFGGEPGRGGYFTPDNDSLAAKYAEIEHENHLEEMAMYKNLQKNNRAQDGVEED.

A helical transmembrane segment spans residues 40-60 (EIALYSFIILLLTGVYLTLFF). Heme contacts are provided by H105 and H119. Helical transmembrane passes span 109–129 (ALTF…TGAF), 137–157 (WIIG…GYSL), and 169–189 (IMSA…WLIF). Residues H206 and H221 each coordinate heme. Transmembrane regions (helical) follow at residues 207–227 (VLII…LVWY), 259–279 (FGLV…INAI), 325–345 (AFWV…YPFI), 371–391 (LGVM…NDLF), and 408–428 (IGLI…CLGL).

The protein belongs to the cytochrome b family. The cytochrome bc1 complex is composed of a cytochrome b (QcrB), the Rieske protein iron-sulfur (QcrA) and a diheme cytochrome c (QcrC) subunit. It depends on heme as a cofactor.

It is found in the cell membrane. The catalysed reaction is a quinol + 2 Fe(III)-[cytochrome c](out) = a quinone + 2 Fe(II)-[cytochrome c](out) + 2 H(+)(out). Its function is as follows. Cytochrome b subunit of the cytochrome bc1 complex, an essential component of the respiratory electron transport chain required for ATP synthesis. The bc1 complex catalyzes the oxidation of menaquinol and the reduction of cytochrome c in the respiratory chain. The bc1 complex operates through a Q-cycle mechanism that couples electron transfer to generation of the proton gradient that drives ATP synthesis. The protein is Cytochrome bc1 complex cytochrome b subunit (qcrB) of Corynebacterium diphtheriae (strain ATCC 700971 / NCTC 13129 / Biotype gravis).